Here is a 62-residue protein sequence, read N- to C-terminus: Large ribosomal subunit protein uL15 (62 aa).

Belongs to the universal ribosomal protein uL15 family.

The protein is Large ribosomal subunit protein uL15 (RPL28) of Candida albicans (Yeast).